A 645-amino-acid chain; its full sequence is ATP-dependent zinc metalloprotease FtsH (645 aa).

Over 1–6 (MDQRPK) the chain is Cytoplasmic. A helical transmembrane segment spans residues 7–27 (FGMILFYIVLGVFLMVALRGL). Residues 28 to 110 (YTTDTNLSVP…VVYEKGNDSL (83 aa)) are Periplasmic-facing. Residues 111 to 131 (FWVNLLGTIIPLAIIVFIWFF) form a helical membrane-spanning segment. At 132 to 645 (AMRSLSGRNS…AKEGNEDEKN (514 aa)) the chain is on the cytoplasmic side. An ATP-binding site is contributed by 204–211 (GPPGTGKT). His-426 contributes to the Zn(2+) binding site. The active site involves Glu-427. 2 residues coordinate Zn(2+): His-430 and Asp-503. The interval 623-645 (SKRKVSAVSTNEEAKEGNEDEKN) is disordered. Basic and acidic residues predominate over residues 634-645 (EEAKEGNEDEKN).

This sequence in the central section; belongs to the AAA ATPase family. The protein in the C-terminal section; belongs to the peptidase M41 family. In terms of assembly, homohexamer. It depends on Zn(2+) as a cofactor.

The protein resides in the cell inner membrane. In terms of biological role, acts as a processive, ATP-dependent zinc metallopeptidase for both cytoplasmic and membrane proteins. Plays a role in the quality control of integral membrane proteins. This is ATP-dependent zinc metalloprotease FtsH from Kosmotoga olearia (strain ATCC BAA-1733 / DSM 21960 / TBF 19.5.1).